Reading from the N-terminus, the 99-residue chain is Co-chaperonin GroES (99 aa).

The protein belongs to the GroES chaperonin family. As to quaternary structure, heptamer of 7 subunits arranged in a ring. Interacts with the chaperonin GroEL.

Its subcellular location is the cytoplasm. In terms of biological role, together with the chaperonin GroEL, plays an essential role in assisting protein folding. The GroEL-GroES system forms a nano-cage that allows encapsulation of the non-native substrate proteins and provides a physical environment optimized to promote and accelerate protein folding. GroES binds to the apical surface of the GroEL ring, thereby capping the opening of the GroEL channel. The chain is Co-chaperonin GroES from Methylacidiphilum infernorum (isolate V4) (Methylokorus infernorum (strain V4)).